The sequence spans 603 residues: Rab proteins geranylgeranyltransferase component A (603 aa).

Phosphoserine is present on S470.

This sequence belongs to the Rab GDI family.

Functionally, substrate-binding subunit (component A) of the Rab geranylgeranyltransferase (GGTase) complex. Binds unprenylated Rab proteins and presents the substrate peptide to the catalytic component B. The component A is thought to be regenerated by transferring its prenylated Rab back to the donor membrane. This chain is Rab proteins geranylgeranyltransferase component A (MRS6), found in Saccharomyces cerevisiae (strain ATCC 204508 / S288c) (Baker's yeast).